Reading from the N-terminus, the 258-residue chain is Probable N-acetylglucosaminyl-phosphatidylinositol de-N-acetylase (258 aa).

A disordered region spans residues 147–170; sequence KSSSTTTTSTTSSSSSSSSLSNRT. Residues 148 to 170 show a composition bias toward low complexity; it reads SSSTTTTSTTSSSSSSSSLSNRT.

It belongs to the PIGL family.

The protein resides in the endoplasmic reticulum membrane. The catalysed reaction is a 6-(N-acetyl-alpha-D-glucosaminyl)-1-(1,2-diacyl-sn-glycero-3-phospho)-1D-myo-inositol + H2O = a 6-(alpha-D-glucosaminyl)-1-(1,2-diacyl-sn-glycero-3-phospho)-1D-myo-inositol + acetate. It functions in the pathway glycolipid biosynthesis; glycosylphosphatidylinositol-anchor biosynthesis. In terms of biological role, involved in the second step of GPI biosynthesis. De-N-acetylation of N-acetylglucosaminyl-phosphatidylinositol. The sequence is that of Probable N-acetylglucosaminyl-phosphatidylinositol de-N-acetylase (pigl) from Dictyostelium discoideum (Social amoeba).